Here is a 239-residue protein sequence, read N- to C-terminus: Phosphoribosylaminoimidazole-succinocarboxamide synthase (239 aa).

This sequence belongs to the SAICAR synthetase family.

The enzyme catalyses 5-amino-1-(5-phospho-D-ribosyl)imidazole-4-carboxylate + L-aspartate + ATP = (2S)-2-[5-amino-1-(5-phospho-beta-D-ribosyl)imidazole-4-carboxamido]succinate + ADP + phosphate + 2 H(+). The protein operates within purine metabolism; IMP biosynthesis via de novo pathway; 5-amino-1-(5-phospho-D-ribosyl)imidazole-4-carboxamide from 5-amino-1-(5-phospho-D-ribosyl)imidazole-4-carboxylate: step 1/2. The polypeptide is Phosphoribosylaminoimidazole-succinocarboxamide synthase (Bacillus mycoides (strain KBAB4) (Bacillus weihenstephanensis)).